Reading from the N-terminus, the 293-residue chain is MSIVALLIGLGPLIGWGFFPTVASKFGGKPVHQIIGATVGTLIFAIILAVVTSSGFPTGTNLLFALLSGAGWGFGQIITFKAFELVGSSRAMPVTTAFQLLGASLWGVFALGNWPGIGHKIIGFTALVVILIGARMTVWSERKEASNAKNLRRAVVLLLIGEFGYWLYSAAPQATSIDGLTAFLPQAMGMVIVAVIYGFMNMKAENPFRNKITWLQIISGFFFAFGALTYLISAQPNMNGLATGFILSQTSVVLATLTGIYFLKQHKTSKEMVITIIGLVLILVAASVTVFIK.

10 helical membrane-spanning segments follow: residues 5–24, 34–51, 58–80, 95–114, 121–138, 153–170, 177–199, 212–234, 241–263, and 273–292; these read ALLIGLGPLIGWGFFPTVAS, IIGATVGTLIFAIILAVV, TGTNLLFALLSGAGWGFGQIITF, TTAFQLLGASLWGVFALGNW, IIGFTALVVILIGARMTV, RAVVLLLIGEFGYWLYSA, IDGLTAFLPQAMGMVIVAVIYGF, ITWLQIISGFFFAFGALTYLISA, LATGFILSQTSVVLATLTGIYFL, and VITIIGLVLILVAASVTVFI.

This sequence belongs to the GRP transporter (TC 2.A.7.5) family.

The protein localises to the cell membrane. Functionally, could be involved in the uptake of ribose. This Staphylococcus aureus (strain COL) protein is Putative ribose uptake protein RbsU (rbsU).